The chain runs to 457 residues: tRNA (guanine(37)-N(1))-methyltransferase (457 aa).

S-adenosyl-L-methionine contacts are provided by residues H225, D263–L264, D291–G292, and N358.

This sequence belongs to the class I-like SAM-binding methyltransferase superfamily. TRM5/TYW2 family. Monomer.

The protein localises to the mitochondrion matrix. It localises to the nucleus. The protein resides in the cytoplasm. The enzyme catalyses guanosine(37) in tRNA + S-adenosyl-L-methionine = N(1)-methylguanosine(37) in tRNA + S-adenosyl-L-homocysteine + H(+). Its function is as follows. Specifically methylates the N1 position of guanosine-37 in various cytoplasmic and mitochondrial tRNAs. Methylation is not dependent on the nature of the nucleoside 5' of the target nucleoside. This is the first step in the biosynthesis of wybutosine (yW), a modified base adjacent to the anticodon of tRNAs and required for accurate decoding. In Coprinopsis cinerea (strain Okayama-7 / 130 / ATCC MYA-4618 / FGSC 9003) (Inky cap fungus), this protein is tRNA (guanine(37)-N(1))-methyltransferase.